Consider the following 284-residue polypeptide: MANEPQKSDDNGQAAEAVVTDDEIVLQDQQLKTIEDEQKSVPLVATLAPFSILCAEYDNETSAAFLSKATELSEVYGEIRYIRGDGNCFYRAILVGLIEIMLKDRARLEKFIASSRDWTRTLVELGFPDWTCTDFCDFFIEFLEKIHSGVHTEEAVYTILNDDGSANYILMFFRLITSAFLKQNSEEYAPFIDEGMTVAQYCEQEIEPMWKDADHLAINSLIKAAGTRVRIEYMDRTAAPNGGWHYDIPSDDQQIAPEITLLYRPGHYDVIYKKDSTEASEIEN.

The OTU domain maps to 77-274 (GEIRYIRGDG…PGHYDVIYKK (198 aa)). D85 is a catalytic residue. The active-site Nucleophile is C88. I176 provides a ligand contact to substrate. Residues H245 and H267 contribute to the active site.

The protein belongs to the peptidase C65 family.

The enzyme catalyses Thiol-dependent hydrolysis of ester, thioester, amide, peptide and isopeptide bonds formed by the C-terminal Gly of ubiquitin (a 76-residue protein attached to proteins as an intracellular targeting signal).. Its function is as follows. Hydrolase that can remove conjugated ubiquitin from proteins and plays an important regulatory role at the level of protein turnover by preventing degradation. Specifically cleaves 'Lys-48'-linked polyubiquitin. The chain is Ubiquitin thioesterase otubain-like (otub-1) from Caenorhabditis elegans.